Here is a 125-residue protein sequence, read N- to C-terminus: uncharacterized protein (125 aa).

It belongs to the HesB/IscA family.

This is an uncharacterized protein from Azospirillum brasilense.